The sequence spans 163 residues: Ribonuclease H (163 aa).

The RNase H type-1 domain occupies 4 to 146; the sequence is SPKKVLIYTD…CDRLAVRASQ (143 aa). Residues aspartate 13, glutamate 51, aspartate 73, and aspartate 138 each contribute to the Mg(2+) site.

Belongs to the RNase H family. Monomer. Mg(2+) is required as a cofactor.

The protein localises to the cytoplasm. It catalyses the reaction Endonucleolytic cleavage to 5'-phosphomonoester.. Its function is as follows. Endonuclease that specifically degrades the RNA of RNA-DNA hybrids. The protein is Ribonuclease H of Rippkaea orientalis (strain PCC 8801 / RF-1) (Cyanothece sp. (strain PCC 8801)).